A 213-amino-acid polypeptide reads, in one-letter code: Thymidylate kinase (213 aa).

9–16 is a binding site for ATP; the sequence is GLEGAGKS.

Belongs to the thymidylate kinase family.

It carries out the reaction dTMP + ATP = dTDP + ADP. Its function is as follows. Phosphorylation of dTMP to form dTDP in both de novo and salvage pathways of dTTP synthesis. This chain is Thymidylate kinase, found in Aeromonas hydrophila subsp. hydrophila (strain ATCC 7966 / DSM 30187 / BCRC 13018 / CCUG 14551 / JCM 1027 / KCTC 2358 / NCIMB 9240 / NCTC 8049).